The following is a 240-amino-acid chain: Myomodulin neuropeptides 2 (240 aa).

Positions 1 to 23 are cleaved as a signal peptide; it reads MWKILETCSCFLVVAVLSGLGKA. The disordered stretch occupies residues 23–44; that stretch reads AQPESFSGSAVTDDSTSGANKR. The propeptide occupies 24–44; that stretch reads QPESFSGSAVTDDSTSGANKR. The segment covering 26–41 has biased composition (polar residues); the sequence is ESFSGSAVTDDSTSGA. Leucine amide is present on residues Leu-51 and Leu-60. Propeptides (connecting peptide) lie at residues 72–81 and 84–112; these read SGHQVPMLRA and GSPD…RDQS. Position 81 is an alanine amide (Ala-81). Gln-115 bears the Pyrrolidone carboxylic acid mark. Tyr-121 is subject to Tyrosine amide. 10 consecutive propeptides (connecting peptide) follow at residues 124–147, 124–148, 124–149, 124–168, 131–168, 149–168, 150–168, 151–168, 171–190, and 171–199; these read DNNG…SNFD, DNNG…NFDL, DNNG…FDLL, DNNG…GGRY, DLLD…GGRY, LSSL…GGRY, SSLN…GGRY, SLNN…GGRY, SLPD…LVQS, and SLPD…PYSS. Residue Ile-207 is modified to Isoleucine amide. The propeptide occupies 210–219; sequence FSGSPRLQAK. The segment at 212–240 is disordered; the sequence is GSPRLQAKAVPRPRIGRQESQMREAKSAE. Ile-226 is modified (isoleucine amide). Positions 227–240 are excised as a propeptide; the sequence is GRQESQMREAKSAE. Positions 227-240 are enriched in basic and acidic residues; it reads GRQESQMREAKSAE.

As to expression, expressed in the pedal-buccal projection neurons in the pedal ganglion.

It localises to the secreted. MMG2-DPs (Myomodulin gene 2-derived peptides) bias egestive feeding programs toward ingestive ones, and modulate accessory radula closer (ARC) muscle contractions. This Aplysia californica (California sea hare) protein is Myomodulin neuropeptides 2 (MMG2).